Here is a 184-residue protein sequence, read N- to C-terminus: Large ribosomal subunit protein uL18 (184 aa).

It belongs to the universal ribosomal protein uL18 family. As to quaternary structure, part of the 50S ribosomal subunit. Contacts the 5S and 23S rRNAs.

Its function is as follows. This is one of the proteins that bind and probably mediate the attachment of the 5S RNA into the large ribosomal subunit, where it forms part of the central protuberance. The polypeptide is Large ribosomal subunit protein uL18 (Natronomonas pharaonis (strain ATCC 35678 / DSM 2160 / CIP 103997 / JCM 8858 / NBRC 14720 / NCIMB 2260 / Gabara) (Halobacterium pharaonis)).